Here is a 224-residue protein sequence, read N- to C-terminus: Ribonuclease HII (224 aa).

The region spanning M1–K210 is the RNase H type-2 domain. Residues D7, E8, and D105 each contribute to the a divalent metal cation site.

The protein belongs to the RNase HII family. The cofactor is Mn(2+). Mg(2+) is required as a cofactor.

It localises to the cytoplasm. It catalyses the reaction Endonucleolytic cleavage to 5'-phosphomonoester.. Endonuclease that specifically degrades the RNA of RNA-DNA hybrids. In Thermococcus sibiricus (strain DSM 12597 / MM 739), this protein is Ribonuclease HII.